Reading from the N-terminus, the 165-residue chain is Chorismate pyruvate-lyase (165 aa).

Positions 35, 77, 115, and 156 each coordinate substrate.

The protein belongs to the UbiC family. In terms of assembly, monomer.

It localises to the cytoplasm. It carries out the reaction chorismate = 4-hydroxybenzoate + pyruvate. It functions in the pathway cofactor biosynthesis; ubiquinone biosynthesis. Functionally, removes the pyruvyl group from chorismate, with concomitant aromatization of the ring, to provide 4-hydroxybenzoate (4HB) for the ubiquinone pathway. This chain is Chorismate pyruvate-lyase, found in Shigella dysenteriae serotype 1 (strain Sd197).